A 103-amino-acid polypeptide reads, in one-letter code: Phosphoribosyl-ATP pyrophosphatase (103 aa).

The disordered stretch occupies residues 79-103 (SVQAELERREGKLSTTRDRKEIDEL). Over residues 83 to 103 (ELERREGKLSTTRDRKEIDEL) the composition is skewed to basic and acidic residues.

The protein belongs to the PRA-PH family.

The protein localises to the cytoplasm. The catalysed reaction is 1-(5-phospho-beta-D-ribosyl)-ATP + H2O = 1-(5-phospho-beta-D-ribosyl)-5'-AMP + diphosphate + H(+). Its pathway is amino-acid biosynthesis; L-histidine biosynthesis; L-histidine from 5-phospho-alpha-D-ribose 1-diphosphate: step 2/9. The sequence is that of Phosphoribosyl-ATP pyrophosphatase from Listeria welshimeri serovar 6b (strain ATCC 35897 / DSM 20650 / CCUG 15529 / CIP 8149 / NCTC 11857 / SLCC 5334 / V8).